We begin with the raw amino-acid sequence, 353 residues long: Putative protein SPATA31J1 (353 aa).

The helical transmembrane segment at 34-54 threads the bilayer; the sequence is IPQIIHFVLFVVFSLVILIIL. The tract at residues 122–271 is disordered; sequence EGSSHHLPRQ…NPGWVSWSDS (150 aa). Residues 182-195 are compositionally biased toward low complexity; it reads SVESLGSPSSLSSS. The span at 211–221 shows a compositional bias: polar residues; sequence PPASTLSPNPT. Over residues 222–237 the composition is skewed to low complexity; that stretch reads SSTESLGYLSSLSSSQ. Residues 244-262 are compositionally biased toward basic residues; it reads PLKHPSHKPRGRSLPRRRN.

This sequence belongs to the SPATA31 family.

The protein localises to the membrane. The sequence is that of Putative protein SPATA31J1 from Homo sapiens (Human).